We begin with the raw amino-acid sequence, 57 residues long: UPF0509 protein YciZ (57 aa).

Belongs to the UPF0509 family.

The protein is UPF0509 protein YciZ (yciZ) of Shigella flexneri.